The primary structure comprises 449 residues: Sensor protein QseC (449 aa).

Over Met1 to Arg12 the chain is Cytoplasmic. Residues Leu13–Trp33 traverse the membrane as a helical segment. At Lys34–Ala156 the chain is on the periplasmic side. The helical transmembrane segment at Leu157–Ile177 threads the bilayer. Over Met178 to Trp449 the chain is Cytoplasmic. Residues Asp243–Trp449 enclose the Histidine kinase domain. His246 carries the post-translational modification Phosphohistidine; by autocatalysis.

The protein resides in the cell inner membrane. It carries out the reaction ATP + protein L-histidine = ADP + protein N-phospho-L-histidine.. In terms of biological role, member of a two-component regulatory system QseB/QseC. Activates the flagella regulon by activating transcription of FlhDC. May activate QseB by phosphorylation. In Escherichia coli (strain K12), this protein is Sensor protein QseC (qseC).